We begin with the raw amino-acid sequence, 89 residues long: Small ribosomal subunit protein uS15 (89 aa).

This sequence belongs to the universal ribosomal protein uS15 family. In terms of assembly, part of the 30S ribosomal subunit. Forms a bridge to the 50S subunit in the 70S ribosome, contacting the 23S rRNA.

Functionally, one of the primary rRNA binding proteins, it binds directly to 16S rRNA where it helps nucleate assembly of the platform of the 30S subunit by binding and bridging several RNA helices of the 16S rRNA. Forms an intersubunit bridge (bridge B4) with the 23S rRNA of the 50S subunit in the ribosome. This is Small ribosomal subunit protein uS15 from Bacillus anthracis (strain CDC 684 / NRRL 3495).